Reading from the N-terminus, the 231-residue chain is Putative carboxymethylenebutenolidase (231 aa).

Catalysis depends on residues C118, D167, and H199.

This sequence belongs to the dienelactone hydrolase family.

It catalyses the reaction 2-(5-oxo-2,5-dihydrofuran-2-ylidene)acetate + H2O = 4-oxohex-2-enedioate + H(+). The sequence is that of Putative carboxymethylenebutenolidase from Aquifex aeolicus (strain VF5).